The primary structure comprises 526 residues: Dye-decolorizing peroxidase (526 aa).

Residues 1 to 21 (MRKSISTFILLSVLSVGQLVA) form the signal peptide. Positions 22 to 63 (ARPRSTNAPPRRRTPQPRRTTSLFINPPALPDLPTVQAVDKL) are excised as a propeptide. Asn-186 carries an N-linked (GlcNAc...) asparagine glycan. The active-site Proton acceptor is Asp-231. N-linked (GlcNAc...) asparagine glycosylation is present at Asn-367. His-376 contributes to the heme binding site. Asn-473 and Asn-484 each carry an N-linked (GlcNAc...) asparagine glycan.

It belongs to the DyP-type peroxidase family. Requires heme b as cofactor.

The protein resides in the secreted. The catalysed reaction is Reactive Blue 5 + 2 H2O2 = 2,2'-disulfonyl azobenzene + 3-[(4-amino-6-chloro-1,3,5-triazin-2-yl)amino]benzenesulfonate + phthalate + 2 H2O + 2 H(+). The enzyme catalyses 2 a phenolic donor + H2O2 = 2 a phenolic radical donor + 2 H2O. Manganese-independent peroxidase that is able to convert a large number of compounds, but its physiological substrate is not known. In addition to classic peroxidase substrates (e.g. 2,6-dimethoxyphenol), oxidizes dyes such as Reactive Blue 5 and Reactive Black 5. This Mycena epipterygia (Yellow-stemmed mycena) protein is Dye-decolorizing peroxidase.